A 613-amino-acid chain; its full sequence is YTH domain-containing family protein 2 (613 aa).

Disordered stretches follow at residues 1 to 43, 215 to 234, and 244 to 396; these read MSAS…AQPR, SQVSTAPTMPPASMAPAKTA, and AKPQ…TVPA. A localization to mRNA processing bodies (P-bodies) region spans residues 2-397; the sequence is SASSLLEQRP…GMGGITVPAE (396 aa). A compositionally biased stretch (polar residues) spans 16–27; it reads NKVQNGAVTQKD. 3 stretches are compositionally biased toward low complexity: residues 218–234, 295–307, and 345–360; these read STAPTMPPASMAPAKTA, NGQPPNQSSPQPG, and PPQLSQGPPASQPSQP. The interval 398-613 is interaction with m6A-containing mRNAs; it reads PHPVLEKLRM…RMQDRQGRVK (216 aa). Positions 423 to 557 constitute a YTH domain; it reads GRVFIIKSYS…DKARQVLKII (135 aa). Residues 429–431, Asp435, 445–446, Asn475, Trp499, and Trp504 contribute to the RNA site; these read KSY and WC. Composition is skewed to basic and acidic residues over residues 578 to 587 and 604 to 613; these read EEEESVKKVE and RMQDRQGRVK. The tract at residues 578–613 is disordered; that stretch reads EEEESVKKVEVQGSDPYSNNSSRSHYRMQDRQGRVK.

Belongs to the YTHDF family. YTHDF2 subfamily.

The protein resides in the cytoplasm. The protein localises to the cytosol. It is found in the P-body. Its subcellular location is the stress granule. It localises to the nucleus. Functionally, specifically recognizes and binds N6-methyladenosine (m6A)-containing RNAs, and regulates their stability. M6A is a modification present at internal sites of mRNAs and some non-coding RNAs and plays a role in mRNA stability and processing. Acts as a regulator of mRNA stability by promoting degradation of m6A-containing mRNAs. The YTHDF paralogs (ythdf1, ythdf2 and ythdf3) share m6A-containing mRNAs targets and act redundantly to mediate mRNA degradation and cellular differentiation. Plays a key role in maternal-to-zygotic transition during early embryonic development, the process during which maternally inherited mRNAs are degraded: acts by binding m6A-containing maternal mRNAs and promoting their degradation. More than one-third of maternal mRNAs can be modified by m6A. Binding to m6A-containing mRNAs results in mRNA degradation. Also involved in hematopoietic stem cells specification by binding to m6A-containing mRNAs, such as notch1a, and promote their degradation. The decreased Notch signaling following notch1a degradation promotes endothelial to hematopoietic transition. Promotes formation of phase-separated membraneless compartments, such as P-bodies or stress granules, by undergoing liquid-liquid phase separation upon binding to mRNAs containing multiple m6A-modified residues: polymethylated mRNAs act as a multivalent scaffold for the binding of YTHDF proteins, juxtaposing their disordered regions and thereby leading to phase separation. The resulting mRNA-YTHDF complexes then partition into different endogenous phase-separated membraneless compartments, such as P-bodies, stress granules or neuronal RNA granules. The chain is YTH domain-containing family protein 2 from Danio rerio (Zebrafish).